A 91-amino-acid polypeptide reads, in one-letter code: Long neurotoxin OH-56 (91 aa).

A signal peptide spans 1–21 (MKTLLLTLVVVTIMCLDLGYT). 5 disulfide bridges follow: Cys-24/Cys-42, Cys-35/Cys-63, Cys-48/Cys-52, Cys-67/Cys-78, and Cys-79/Cys-84.

This sequence belongs to the three-finger toxin family. Long-chain subfamily. Type II alpha-neurotoxin sub-subfamily. Expressed by the venom gland.

The protein resides in the secreted. Functionally, binds with high affinity to muscular (alpha-1/CHRNA1) and neuronal (alpha-7/CHRNA7) nicotinic acetylcholine receptor (nAChR) and inhibits acetylcholine from binding to the receptor, thereby impairing neuromuscular and neuronal transmission. This Ophiophagus hannah (King cobra) protein is Long neurotoxin OH-56.